A 107-amino-acid polypeptide reads, in one-letter code: RNA silencing suppressor (107 aa).

The basic stretch occupies residues 46–49 (RRRR). The segment at 56–78 (CHRCYRVYPPLFPEISRCDNRTC) adopts a C4-type zinc-finger fold.

This sequence belongs to the carlaviruses nucleic acid-binding protein family.

Functionally, suppressor of viral-induced RNA silencing. The potential mechanism of action is based on sequestering siRNAs. The chain is RNA silencing suppressor from Chrysanthemum morifolium (Florist's daisy).